The primary structure comprises 850 residues: MENELPVPHTSNRASVTTNTSGTNSSSGCISSSGGGGGSGGRPTAPQISVYSGIPDRQTVQVIQQALHRQPSTAAQYLQQMYAAQQQHLMLQTAALQQQHLSSAQLQSLAAVQQASLVANRQGSTPGSSVSSQAPAQSSSLNLAASPAAAQLINRAQSVNSAAASGLAQQAVLLGNTSSPALTASQAQMYLRAQMLIFTPTATVATVQPELCTGSPARPPTPAQVQNLTLRTQQTPAAAASGPPPTQPVLPSLALKPTPSSSQPLPAPPQGRTMAQGSPAGAKPSGTDNAPETLKAGDGNCNMEGRPGPGRAVPAVATHPLIAPAYAHLQSHQLLPQPPAKHPQPQFVAQQQPQPPRPAPQVQSQPQLASVSPSLALQSSPEDHALPLGSVTQALPLQCSTTHVHKPGNSQQCHLPTLDTGSQNGHPEGGSHPPQRRFQHTSAVILQVQPASPVTPQQCAPDDWKEVVPAEKSVPVARPGPSPHQQAIIPAIPGGLPGPKSPNIQQCPAHETGQGIVHALTDLSSPGMTSGNGNSASSIAGTAPQNGENKPPQAIVKPQILTHVIEGFVIQEGAEPFPVGRSSLLVGNLKKKYAQGFLPEKPPQQDHTTTTDSEMEEPYLQESKEEGTPLKLKCELCGRVDFAYKFKRSKRFCSMACAKRYNVGCTKRVGLFHSDRSKLQKAGTTTHNRRRASKASLPTLTKDTKKQPSGTVPLSVTAALQLAHSQEDSSRCSDNSSYEEPLSPISASSSTSRRRQGQRDLDLPDMHMRDLVGVGHHFLPSEPTKWNVEDVYEFIRSLPGCQEIAEEFRAQEIDGQALLLLKEDHLMSAMNIKLGPALKIYARISMLKDS.

Disordered regions lie at residues M1–Q79, Q233–P314, L335–L386, T402–R436, and M528–Q553. Low complexity predominate over residues S15 to S32. The segment at S33–D56 is interaction with BMI1. Residues P343 to Q352 are compositionally biased toward low complexity. Composition is skewed to polar residues over residues L368–S380 and T402–G425. The span at T529–A543 shows a compositional bias: low complexity. The HD1 signature appears at K550–V579. Residues K590 and K592 each participate in a glycyl lysine isopeptide (Lys-Gly) (interchain with G-Cter in SUMO2) cross-link. Residues F597–K624 are disordered. T611 is subject to Phosphothreonine. S613 is subject to Phosphoserine. K624 is covalently cross-linked (Glycyl lysine isopeptide (Lys-Gly) (interchain with G-Cter in SUMO2)). An FCS-type zinc finger spans residues E625–K659. C634, C637, C653, and C657 together coordinate Zn(2+). Disordered stretches follow at residues R676–V712 and S725–P764. K694 participates in a covalent cross-link: Glycyl lysine isopeptide (Lys-Gly) (interchain with G-Cter in SUMO2). Positions S696–V712 are enriched in polar residues. At S743 the chain carries Phosphoserine. The 65-residue stretch at W786–S850 folds into the SAM domain. A Glycyl lysine isopeptide (Lys-Gly) (interchain with G-Cter in SUMO2) cross-link involves residue K839.

Component of a PRC1-like complex. Interacts with CBX4. Interacts with BMI1, PCGF2, PHC1 and RNF2. Interacts with CHTOP. Interacts with the N-terminal region of the SP1 transcription factor and with MAPKAPK2. Interacts with SAMD7. Interacts with SAMD11. In terms of tissue distribution, isoform 2 is ubiquitously expressed in embryos and adult tissues at much higher level than isoform 1.

The protein resides in the nucleus. Its function is as follows. Component of a Polycomb group (PcG) multiprotein PRC1-like complex, a complex class required to maintain the transcriptionally repressive state of many genes, including Hox genes, throughout development. PcG PRC1 complex acts via chromatin remodeling and modification of histones; it mediates monoubiquitination of histone H2A 'Lys-119', rendering chromatin heritably changed in its expressibility. The chain is Polyhomeotic-like protein 2 (Phc2) from Mus musculus (Mouse).